The chain runs to 94 residues: Neurotoxin 213 (94 aa).

Residues 1-22 (MLKFILTCTSVILFTAVEDSSC) form the signal peptide. Residues 24–88 (KGGNYPISVY…YWDYHRNNCK (65 aa)) form the LCN-type CS-alpha/beta domain. 3 disulfides stabilise this stretch: Cys39–Cys62, Cys48–Cys67, and Cys52–Cys69.

It belongs to the long (3 C-C) scorpion toxin superfamily. As to expression, expressed by the venom gland.

It is found in the secreted. This Lychas mucronatus (Chinese swimming scorpion) protein is Neurotoxin 213.